Reading from the N-terminus, the 272-residue chain is tRNA pseudouridine synthase B (272 aa).

Residue D38 is the Nucleophile of the active site.

It belongs to the pseudouridine synthase TruB family. Type 1 subfamily.

The enzyme catalyses uridine(55) in tRNA = pseudouridine(55) in tRNA. Its function is as follows. Responsible for synthesis of pseudouridine from uracil-55 in the psi GC loop of transfer RNAs. This Campylobacter jejuni subsp. jejuni serotype O:23/36 (strain 81-176) protein is tRNA pseudouridine synthase B.